Reading from the N-terminus, the 136-residue chain is Crossover junction endodeoxyribonuclease Hjc (136 aa).

Mg(2+) is bound at residue Glu9. Ser29 is a catalytic residue. Mg(2+) contacts are provided by Asp38 and Glu51.

The protein belongs to the Holliday junction resolvase Hjc family. As to quaternary structure, homodimer. It depends on Mg(2+) as a cofactor.

The catalysed reaction is Endonucleolytic cleavage at a junction such as a reciprocal single-stranded crossover between two homologous DNA duplexes (Holliday junction).. A structure-specific endonuclease that resolves Holliday junction (HJ) intermediates during genetic recombination. Cleaves 4-way DNA junctions introducing paired nicks in opposing strands, leaving a 5'-terminal phosphate and a 3'-terminal hydroxyl group that are subsequently ligated to produce recombinant products. The polypeptide is Crossover junction endodeoxyribonuclease Hjc (Archaeoglobus fulgidus (strain ATCC 49558 / DSM 4304 / JCM 9628 / NBRC 100126 / VC-16)).